The chain runs to 371 residues: Anhydro-N-acetylmuramic acid kinase (371 aa).

9 to 16 (GTSMDGID) provides a ligand contact to ATP.

This sequence belongs to the anhydro-N-acetylmuramic acid kinase family.

The enzyme catalyses 1,6-anhydro-N-acetyl-beta-muramate + ATP + H2O = N-acetyl-D-muramate 6-phosphate + ADP + H(+). Its pathway is amino-sugar metabolism; 1,6-anhydro-N-acetylmuramate degradation. It participates in cell wall biogenesis; peptidoglycan recycling. Functionally, catalyzes the specific phosphorylation of 1,6-anhydro-N-acetylmuramic acid (anhMurNAc) with the simultaneous cleavage of the 1,6-anhydro ring, generating MurNAc-6-P. Is required for the utilization of anhMurNAc either imported from the medium or derived from its own cell wall murein, and thus plays a role in cell wall recycling. The protein is Anhydro-N-acetylmuramic acid kinase of Azorhizobium caulinodans (strain ATCC 43989 / DSM 5975 / JCM 20966 / LMG 6465 / NBRC 14845 / NCIMB 13405 / ORS 571).